A 287-amino-acid polypeptide reads, in one-letter code: Pyridoxal 5'-phosphate synthase subunit PdxS (287 aa).

Residue D21 coordinates D-ribose 5-phosphate. K78 functions as the Schiff-base intermediate with D-ribose 5-phosphate in the catalytic mechanism. G150 lines the D-ribose 5-phosphate pocket. Residue R162 coordinates D-glyceraldehyde 3-phosphate. D-ribose 5-phosphate is bound by residues G211 and G232–S233.

It belongs to the PdxS/SNZ family. As to quaternary structure, in the presence of PdxT, forms a dodecamer of heterodimers.

The catalysed reaction is aldehydo-D-ribose 5-phosphate + D-glyceraldehyde 3-phosphate + L-glutamine = pyridoxal 5'-phosphate + L-glutamate + phosphate + 3 H2O + H(+). It participates in cofactor biosynthesis; pyridoxal 5'-phosphate biosynthesis. Catalyzes the formation of pyridoxal 5'-phosphate from ribose 5-phosphate (RBP), glyceraldehyde 3-phosphate (G3P) and ammonia. The ammonia is provided by the PdxT subunit. Can also use ribulose 5-phosphate and dihydroxyacetone phosphate as substrates, resulting from enzyme-catalyzed isomerization of RBP and G3P, respectively. This is Pyridoxal 5'-phosphate synthase subunit PdxS from Francisella philomiragia subsp. philomiragia (strain ATCC 25017 / CCUG 19701 / FSC 153 / O#319-036).